The chain runs to 341 residues: MVKVYYNGDANEAYIQGKKVAIIGYGSQGHAHAQNLRDSGVEVIIGLRKGKSWEKAEQDGFVVLPVSEATKQADVVMILLPDEHQPKVYKEEIAPNLQPGNALVFAHGFNIHFNQIVPPSDVDVFLVAPKGPGHLVRRTYTEGAGVPALIAVYQDVSGEAKETALAYAKAIGSARAGVIETTFKEETETDLFGEQAVLCGGLTALVKAGFETLVEAGYQPEIAYFECLHELKLIVDLMYEGGLAGMRYSISDTAQWGDFVTGPRIINDAVKAEMKKVLEDIQTGKFAKGWILENEANRPEFNAINRRENEHLIEVVGRELRKMMPFVNAKQKDVVTVGAKN.

Residues valine 2–threonine 181 enclose the KARI N-terminal Rossmann domain. NADP(+) is bound by residues tyrosine 25–glutamine 28, arginine 48, serine 52, and aspartate 82–glutamine 85. The active site involves histidine 107. Glycine 133 lines the NADP(+) pocket. A KARI C-terminal knotted domain is found at threonine 182–valine 327. Residues aspartate 190, glutamate 194, glutamate 226, and glutamate 230 each contribute to the Mg(2+) site. Serine 251 contacts substrate.

This sequence belongs to the ketol-acid reductoisomerase family. Mg(2+) serves as cofactor.

It catalyses the reaction (2R)-2,3-dihydroxy-3-methylbutanoate + NADP(+) = (2S)-2-acetolactate + NADPH + H(+). The catalysed reaction is (2R,3R)-2,3-dihydroxy-3-methylpentanoate + NADP(+) = (S)-2-ethyl-2-hydroxy-3-oxobutanoate + NADPH + H(+). It functions in the pathway amino-acid biosynthesis; L-isoleucine biosynthesis; L-isoleucine from 2-oxobutanoate: step 2/4. The protein operates within amino-acid biosynthesis; L-valine biosynthesis; L-valine from pyruvate: step 2/4. Its function is as follows. Involved in the biosynthesis of branched-chain amino acids (BCAA). Catalyzes an alkyl-migration followed by a ketol-acid reduction of (S)-2-acetolactate (S2AL) to yield (R)-2,3-dihydroxy-isovalerate. In the isomerase reaction, S2AL is rearranged via a Mg-dependent methyl migration to produce 3-hydroxy-3-methyl-2-ketobutyrate (HMKB). In the reductase reaction, this 2-ketoacid undergoes a metal-dependent reduction by NADPH to yield (R)-2,3-dihydroxy-isovalerate. The protein is Ketol-acid reductoisomerase (NADP(+)) of Anoxybacillus flavithermus (strain DSM 21510 / WK1).